Here is an 89-residue protein sequence, read N- to C-terminus: MTSVNNNMTSRRNLVLREIKRQILWAWTDPKSYRMSVGAIHALRTAFECYMNIIMTDCAIMAAHGKRKTITDRDIAFHQYIKPFYLPRY.

It belongs to the histone H3 family.

The chain is Histone H3.v2 (H3v2) from Dictyostelium discoideum (Social amoeba).